Consider the following 260-residue polypeptide: Exosome complex component Rrp4 (260 aa).

The S1 motif domain occupies 59–128 (NDVVIGIVIV…NSMKVELALR (70 aa)). Residues 136–194 (KTGQIVEVEPVKVPRVIGHGGSMISMLKKETNCSIFVGQNGRIWIDGKDDDVELLSKAL) form the KH domain.

It belongs to the RRP4 family. Component of the archaeal exosome complex. Forms a trimer of Rrp4 and/or Csl4 subunits. The trimer associates with a hexameric ring-like arrangement composed of 3 Rrp41-Rrp42 heterodimers.

Its subcellular location is the cytoplasm. In terms of biological role, non-catalytic component of the exosome, which is a complex involved in RNA degradation. Increases the RNA binding and the efficiency of RNA degradation. Confers strong poly(A) specificity to the exosome. The chain is Exosome complex component Rrp4 from Methanosarcina barkeri (strain Fusaro / DSM 804).